A 322-amino-acid chain; its full sequence is Crystallin J1A (322 aa).

It belongs to the ADP-ribosylglycohydrolase family. J1 crystallin subfamily. Expressed in the rhopalia. Present in both the large and small eyes.

This Tripedalia cystophora (Jellyfish) protein is Crystallin J1A.